We begin with the raw amino-acid sequence, 300 residues long: Iron/alpha-ketoglutarate-dependent dioxygenase okaE (300 aa).

Fe cation contacts are provided by histidine 134, aspartate 136, and histidine 210.

It belongs to the PhyH family. Homodimer. Fe cation serves as cofactor.

The enzyme catalyses okaramine A + 2-oxoglutarate + AH2 + O2 = 12-deshydroxyl okaramine E + succinate + A + CO2 + H2O. The catalysed reaction is 12-deshydroxyl okaramine E + 2-oxoglutarate + O2 = okaramine E + succinate + CO2. It carries out the reaction okaramine A + 2-oxoglutarate + O2 = okaramine E + succinate + CO2. Its pathway is alkaloid biosynthesis. It functions in the pathway secondary metabolite biosynthesis; terpenoid biosynthesis. In terms of biological role, iron/alpha-ketoglutarate-dependent dioxygenase; part of the gene cluster that mediates the biosynthesis of okaramine B, a prenylated indole alkaloid that possesses an unusual octacyclic ring system, including a four-membered azetidine ring and an eight-membered azocine ring, and that exhibits insecticidal activity against silkworm larvae. Within the pathway, okaE forms the unusual 2-dimethyl-3-methyl-azetidine ring to yield 12-deshydroxyl okaramine E from okaramine A. OkaE also catalyzes the hydroxylation of 12-deshydroxyl okaramine E to produce okaramine E. The biosynthesis begins with the NRPS okaA that condenses two tryptophan molecules into cyclo(L-Trp-L-Trp). Prenylation by the prenyltransferase okaC then leads to the formation of cyclo(N8-(alpha,alpha-dimethylallyl)-L-Trp-6a-(alpha,alpha-dime-thylallyl)-L-Trp). This is followed by indole 2,3-epoxidation by the FAD-dependent monooxygenase okaB to facilitate the formation of the hexahydropyrrolo[2,3-b]indole (HPI) moiety of okaramine C. The cytochrome P450 monooxygenase okaD then likely catalyzes formation of the eight-membered ring of okaramine A. The dioxygenase okaE further forms the unusual 2-dimethyl-3-methyl-azetidine ring to yield 12-deshydroxyl okaramine E, as well as the hydroxylation of 12-deshydroxyl okaramine E to produce okaramine E. The cytochrome P450 monoxygenase okaG converts 12-deshydroxyl okaramine E into 3-desmethyl okaramine B which is further methylated by the methyltransferase okaF into okaramine B. In a shunt pathway, okaG and okaF together are also able to convert okaramine E into okaramine D. Okaramine H is produced by nonenzymatic conversion from okaramine A. The polypeptide is Iron/alpha-ketoglutarate-dependent dioxygenase okaE (Penicillium ochrochloron).